Here is a 383-residue protein sequence, read N- to C-terminus: Glucose-1-phosphate adenylyltransferase (383 aa).

Alpha-D-glucose 1-phosphate is bound by residues tyrosine 99, glycine 164, 179–180, and serine 190; that span reads EK.

This sequence belongs to the bacterial/plant glucose-1-phosphate adenylyltransferase family. As to quaternary structure, homotetramer.

The enzyme catalyses alpha-D-glucose 1-phosphate + ATP + H(+) = ADP-alpha-D-glucose + diphosphate. It functions in the pathway glycan biosynthesis; glycogen biosynthesis. Involved in the biosynthesis of ADP-glucose, a building block required for the elongation reactions to produce glycogen. Catalyzes the reaction between ATP and alpha-D-glucose 1-phosphate (G1P) to produce pyrophosphate and ADP-Glc. The polypeptide is Glucose-1-phosphate adenylyltransferase (Halalkalibacterium halodurans (strain ATCC BAA-125 / DSM 18197 / FERM 7344 / JCM 9153 / C-125) (Bacillus halodurans)).